A 406-amino-acid polypeptide reads, in one-letter code: Renin (406 aa).

A signal peptide spans 1–23 (MDGWRRMPRWGLLLLLWGSCTFG). Residues 24 to 66 (LPTDTTTFKRIFLKRMPSIRESLKERGVDMARLGPEWSQPMKR) constitute a propeptide, activation peptide. N-linked (GlcNAc...) asparagine glycosylation is present at Asn-71. One can recognise a Peptidase A1 domain in the interval 86 to 403 (YYGEIGIGTP…DRRNNRIGFA (318 aa)). Asp-104 is a catalytic residue. Cys-117 and Cys-124 are disulfide-bonded. Residue Asn-141 is glycosylated (N-linked (GlcNAc...) asparagine). Cys-283 and Cys-287 are disulfide-bonded. Asp-292 is an active-site residue. An intrachain disulfide couples Cys-325 to Cys-362.

Belongs to the peptidase A1 family. Interacts with ATP6AP2.

It is found in the secreted. The protein resides in the membrane. The catalysed reaction is Cleavage of Leu-|-Xaa bond in angiotensinogen to generate angiotensin I.. Its activity is regulated as follows. Interaction with ATP6AP2 results in a 5-fold increased efficiency in angiotensinogen processing. Its function is as follows. Renin is a highly specific endopeptidase, whose only known function is to generate angiotensin I from angiotensinogen in the plasma, initiating a cascade of reactions that produce an elevation of blood pressure and increased sodium retention by the kidney. The protein is Renin (REN) of Homo sapiens (Human).